Here is a 294-residue protein sequence, read N- to C-terminus: Tissue factor (294 aa).

The signal sequence occupies residues 1-28 (MAILVRPRLLAALAPTFLGCLLLQVIAG). Topologically, residues 29–251 (AGIPEKAFNL…TEQWKSFLGE (223 aa)) are extracellular. N-linked (GlcNAc...) asparagine glycans are attached at residues N37 and N57. A disulfide bridge connects residues C75 and C83. N-linked (GlcNAc...) asparagine glycans are attached at residues N169 and N200. A disulfide bridge connects residues C218 and C241. Positions 245-247 (WKS) match the WKS motif motif. A helical transmembrane segment spans residues 252 to 274 (TLIIVGAVVLLATIFIILLSISL). C275 is lipidated: S-palmitoyl cysteine. Residues 275 to 294 (CKRRKNRAGQKGKNTPSRLA) are Cytoplasmic-facing.

The protein belongs to the tissue factor family. In terms of assembly, interacts with HSPE; the interaction, inhibited by heparin, promotes the generation of activated factor X and activates coagulation in the presence of activated factor VII.

It localises to the membrane. In terms of biological role, initiates blood coagulation by forming a complex with circulating factor VII or VIIa. The [TF:VIIa] complex activates factors IX or X by specific limited proteolysis. TF plays a role in normal hemostasis by initiating the cell-surface assembly and propagation of the coagulation protease cascade. The sequence is that of Tissue factor (F3) from Mus musculus (Mouse).